The following is a 294-amino-acid chain: Acetyl-coenzyme A carboxylase carboxyl transferase subunit beta (294 aa).

Residues 30–294 enclose the CoA carboxyltransferase N-terminal domain; the sequence is IMTKCPECKK…PEAGGESDGE (265 aa). 4 residues coordinate Zn(2+): C34, C37, C53, and C56. A C4-type zinc finger spans residues 34-56; sequence CPECKKIMYTKELQKNLMVCNYC.

It belongs to the AccD/PCCB family. In terms of assembly, acetyl-CoA carboxylase is a heterohexamer composed of biotin carboxyl carrier protein (AccB), biotin carboxylase (AccC) and two subunits each of ACCase subunit alpha (AccA) and ACCase subunit beta (AccD). The cofactor is Zn(2+).

The protein resides in the cytoplasm. The enzyme catalyses N(6)-carboxybiotinyl-L-lysyl-[protein] + acetyl-CoA = N(6)-biotinyl-L-lysyl-[protein] + malonyl-CoA. Its pathway is lipid metabolism; malonyl-CoA biosynthesis; malonyl-CoA from acetyl-CoA: step 1/1. Component of the acetyl coenzyme A carboxylase (ACC) complex. Biotin carboxylase (BC) catalyzes the carboxylation of biotin on its carrier protein (BCCP) and then the CO(2) group is transferred by the transcarboxylase to acetyl-CoA to form malonyl-CoA. The chain is Acetyl-coenzyme A carboxylase carboxyl transferase subunit beta from Listeria innocua serovar 6a (strain ATCC BAA-680 / CLIP 11262).